A 432-amino-acid polypeptide reads, in one-letter code: Glutamyl-tRNA reductase (432 aa).

Residues 49–52 (TCNR), S107, 112–114 (ETQ), and Q118 contribute to the substrate site. C50 functions as the Nucleophile in the catalytic mechanism. 186 to 191 (GAGEMG) serves as a coordination point for NADP(+).

Belongs to the glutamyl-tRNA reductase family. Homodimer.

The catalysed reaction is (S)-4-amino-5-oxopentanoate + tRNA(Glu) + NADP(+) = L-glutamyl-tRNA(Glu) + NADPH + H(+). It participates in porphyrin-containing compound metabolism; protoporphyrin-IX biosynthesis; 5-aminolevulinate from L-glutamyl-tRNA(Glu): step 1/2. Catalyzes the NADPH-dependent reduction of glutamyl-tRNA(Glu) to glutamate 1-semialdehyde (GSA). The polypeptide is Glutamyl-tRNA reductase (Campylobacter jejuni subsp. jejuni serotype O:6 (strain 81116 / NCTC 11828)).